The primary structure comprises 418 residues: Queuine tRNA-ribosyltransferase accessory subunit 2 (418 aa).

Residues Cys-325, Cys-327, Cys-330, and His-356 each coordinate Zn(2+).

It belongs to the queuine tRNA-ribosyltransferase family. QTRT2 subfamily. As to quaternary structure, heterodimer of a catalytic subunit and an accessory subunit. Zn(2+) is required as a cofactor.

It is found in the cytoplasm. Its function is as follows. Non-catalytic subunit of the queuine tRNA-ribosyltransferase (TGT) that catalyzes the base-exchange of a guanine (G) residue with queuine (Q) at position 34 (anticodon wobble position) in tRNAs with GU(N) anticodons (tRNA-Asp, -Asn, -His and -Tyr), resulting in the hypermodified nucleoside queuosine (7-(((4,5-cis-dihydroxy-2-cyclopenten-1-yl)amino)methyl)-7-deazaguanosine). This Drosophila melanogaster (Fruit fly) protein is Queuine tRNA-ribosyltransferase accessory subunit 2.